The following is a 154-amino-acid chain: Prefoldin subunit 2 (154 aa).

Residues 124 to 139 (IRLMGEDEKPAAKENS) are compositionally biased toward basic and acidic residues. The disordered stretch occupies residues 124-154 (IRLMGEDEKPAAKENSEGAGAKASSAGVLVS). The span at 140-154 (EGAGAKASSAGVLVS) shows a compositional bias: low complexity.

It belongs to the prefoldin subunit beta family. Heterohexamer of two PFD-alpha type and four PFD-beta type subunits. Component of the PAQosome complex which is responsible for the biogenesis of several protein complexes and which consists of R2TP complex members RUVBL1, RUVBL2, RPAP3 and PIH1D1, URI complex members PFDN2, PFDN6, PDRG1, UXT and URI1 as well as ASDURF, POLR2E and DNAAF10/WDR92. Interacts with URI1; the interaction is phosphorylation-dependent and occurs in a growth-dependent manner.

It is found in the nucleus. It localises to the cytoplasm. Its subcellular location is the mitochondrion. Binds specifically to cytosolic chaperonin (c-CPN) and transfers target proteins to it. Binds to nascent polypeptide chain and promotes folding in an environment in which there are many competing pathways for nonnative proteins. The protein is Prefoldin subunit 2 (PFDN2) of Homo sapiens (Human).